Here is a 41-residue protein sequence, read N- to C-terminus: Perlinhibin (41 aa).

Post-translationally, contains four disulfide bonds.

Binds to calcite crystals in the shell and inhibits further shell growth at the binding site. This is Perlinhibin from Haliotis laevigata (Smooth Australian abalone).